The following is a 185-amino-acid chain: Protein E3 homolog (185 aa).

Residues 7–73 enclose the Z-binding domain; that stretch reads TVNDAEIFSL…SNPPKWFKNY (67 aa). The DRBM domain occupies 112–179; that stretch reads NPCIVLNEYC…SKITMDEILD (68 aa).

The protein belongs to the poxviridae E3 protein family.

In terms of biological role, RNA-binding protein that plays a role in the inhibition of multiple cellular antiviral responses activated by double-stranded RNA (dsRNA), such as inhibition of PKR activation, necroptosis, and IFN-mediated antiviral activities. Recognizes and binds Z-RNA structures via its Z-binding domain and dsRNA via its DRBM domain: RNA-binding activity is required to escape host ZBP1-dependent necroptosis. Mechanistically, the Z-binding domain binds Z-RNAs that are produced during Yaba-like disease virus infection, thereby competing with Z-RNA detection by host ZBP1, suppressing ZBP1-dependent necroptosis. The protein is Protein E3 homolog of Yaba-like disease virus (YLDV).